The following is a 100-amino-acid chain: Urease subunit gamma (100 aa).

Belongs to the urease gamma subunit family. Heterotrimer of UreA (gamma), UreB (beta) and UreC (alpha) subunits. Three heterotrimers associate to form the active enzyme.

Its subcellular location is the cytoplasm. It catalyses the reaction urea + 2 H2O + H(+) = hydrogencarbonate + 2 NH4(+). The protein operates within nitrogen metabolism; urea degradation; CO(2) and NH(3) from urea (urease route): step 1/1. The polypeptide is Urease subunit gamma (Streptomyces griseus subsp. griseus (strain JCM 4626 / CBS 651.72 / NBRC 13350 / KCC S-0626 / ISP 5235)).